Here is a 191-residue protein sequence, read N- to C-terminus: uncharacterized protein (191 aa).

To B.subtilis GlpP.

This is an uncharacterized protein from Escherichia coli (strain K12).